The sequence spans 399 residues: Coenzyme A biosynthesis bifunctional protein CoaBC (399 aa).

Residues 1 to 190 (MQTLAGKKIL…FQPKVLEGKS (190 aa)) form a phosphopantothenoylcysteine decarboxylase region. The Proton donor role is filled by Cys-159. Residues 191 to 399 (ILISAGPTRE…KILEKMRELM (209 aa)) are phosphopantothenate--cysteine ligase. CTP-binding positions include Asp-279, Lys-289, 307 to 310 (PDIV), Phe-326, Lys-340, and Lys-344.

This sequence in the N-terminal section; belongs to the HFCD (homo-oligomeric flavin containing Cys decarboxylase) superfamily. The protein in the C-terminal section; belongs to the PPC synthetase family. Mg(2+) serves as cofactor. FMN is required as a cofactor.

The enzyme catalyses N-[(R)-4-phosphopantothenoyl]-L-cysteine + H(+) = (R)-4'-phosphopantetheine + CO2. It catalyses the reaction (R)-4'-phosphopantothenate + L-cysteine + CTP = N-[(R)-4-phosphopantothenoyl]-L-cysteine + CMP + diphosphate + H(+). The protein operates within cofactor biosynthesis; coenzyme A biosynthesis; CoA from (R)-pantothenate: step 2/5. It functions in the pathway cofactor biosynthesis; coenzyme A biosynthesis; CoA from (R)-pantothenate: step 3/5. In terms of biological role, catalyzes two sequential steps in the biosynthesis of coenzyme A. In the first step cysteine is conjugated to 4'-phosphopantothenate to form 4-phosphopantothenoylcysteine. In the second step the latter compound is decarboxylated to form 4'-phosphopantotheine. This is Coenzyme A biosynthesis bifunctional protein CoaBC from Vibrio parahaemolyticus serotype O3:K6 (strain RIMD 2210633).